A 357-amino-acid polypeptide reads, in one-letter code: Peptide chain release factor 1 (357 aa).

An N5-methylglutamine modification is found at glutamine 234. The interval 282–313 (DSKKQEQRSNNRKQQVGSGDRSERIRTYNFPQ) is disordered.

Belongs to the prokaryotic/mitochondrial release factor family. Methylated by PrmC. Methylation increases the termination efficiency of RF1.

It is found in the cytoplasm. Functionally, peptide chain release factor 1 directs the termination of translation in response to the peptide chain termination codons UAG and UAA. In Borreliella afzelii (strain PKo) (Borrelia afzelii), this protein is Peptide chain release factor 1.